The chain runs to 193 residues: Mediator of RNA polymerase II transcription subunit 11 (193 aa).

Residues 31–68 (AREIMQDLGKEKQISKNKMDDNANSFKKLITQVENELS) are a coiled coil. The tract at residues 115–193 (IEPPTQEVDE…EEEEGEQMEN (79 aa)) is disordered. Acidic residues predominate over residues 121–143 (EVDEDNEDEEDSGDADMLEETPE). Residues 150–175 (TTSSSATTSDGGSGGADDAASSSAPR) show a composition bias toward low complexity. Acidic residues predominate over residues 184 to 193 (EEEEGEQMEN).

This sequence belongs to the Mediator complex subunit 11 family. Component of the Mediator complex.

Its subcellular location is the nucleus. Functionally, component of the Mediator complex, a coactivator involved in the regulated transcription of nearly all RNA polymerase II-dependent genes. Mediator functions as a bridge to convey information from gene-specific regulatory proteins to the basal RNA polymerase II transcription machinery. Mediator is recruited to promoters by direct interactions with regulatory proteins and serves as a scaffold for the assembly of a functional pre-initiation complex with RNA polymerase II and the general transcription factors. In Caenorhabditis briggsae, this protein is Mediator of RNA polymerase II transcription subunit 11 (mdt-11).